The sequence spans 193 residues: Large ribosomal subunit protein uL18 (193 aa).

This sequence belongs to the universal ribosomal protein uL18 family. Part of the 50S ribosomal subunit. Contacts the 5S and 23S rRNAs.

This is one of the proteins that bind and probably mediate the attachment of the 5S RNA into the large ribosomal subunit, where it forms part of the central protuberance. The sequence is that of Large ribosomal subunit protein uL18 from Methanococcus maripaludis (strain C6 / ATCC BAA-1332).